A 251-amino-acid chain; its full sequence is Homeobox protein notochord (251 aa).

Residues 1 to 14 (MPSPRPRGSPPPAP) show a composition bias toward pro residues. The tract at residues 1–47 (MPSPRPRGSPPPAPSGSRVRPPRSGRSPAPRSPTGPNTPRAPGRFES) is disordered. Low complexity predominate over residues 15-35 (SGSRVRPPRSGRSPAPRSPTG). Positions 156-215 (QKRVRTMFNLEQLEELEKVFAKQHNLVGKKRAQLAARLKLTENQVRVWFQNRRVKYQKQQ) form a DNA-binding region, homeobox. Positions 224–242 (AEAASLDEPSSSSIASIQS) are enriched in low complexity. Positions 224-251 (AEAASLDEPSSSSIASIQSDDAESGVDG) are disordered.

Its subcellular location is the nucleus. Functionally, transcription regulator acting downstream of both FOXA2 and Brachyury (T) during notochord development. Required for node morphogenesis. Is essential for cilia formation in the posterior notochord (PNC) and for left-right patterning; acts upstream of FOXJ1 and RFX3 in this process and is required for the expression of various components important for axonemal assembly and function. Plays a role in regulating axial versus paraxial cell fate. Activates the transcription of ciliary proteins C11orf97 homolog, FAM183B and SPACA9 in the embryonic ventral node. The polypeptide is Homeobox protein notochord (NOTO) (Homo sapiens (Human)).